The sequence spans 142 residues: Salivary protein 15a (142 aa).

The first 20 residues, 1-20 (MKYLGLALISAVFLIGACQA), serve as a signal peptide directing secretion. 3 disulfides stabilise this stretch: C27–C44, C40–C108, and C91–C117.

Belongs to the PBP/GOBP family. As to expression, female salivary gland (at protein level).

The protein resides in the secreted. Inhibits contact coagulation pathway activation in the host by sequestering anionic polymers, such as polyphosphate and dextran sulfate, and thus blocking interaction of protein components of the pathway with negatively charged surfaces. Inhibits dextran sulfate-mediated autoactivation of host coagulation factor XII (F12). Inhibits dextran sulfate-mediated autoactivation of host factor XI (F11). Inhibits polyphosphate-mediated activation of host F11 by thrombin (F2). May inhibit dextran sulfate-mediated bradykinin generation in host plasma. The protein is Salivary protein 15a of Phlebotomus duboscqi (Sandfly).